Here is a 262-residue protein sequence, read N- to C-terminus: 3-methyl-2-oxobutanoate hydroxymethyltransferase (262 aa).

Mg(2+) contacts are provided by Asp-43 and Asp-82. Residues 43-44 (DS), Asp-82, and Lys-110 each bind 3-methyl-2-oxobutanoate. Mg(2+) is bound at residue Glu-112. Glu-179 acts as the Proton acceptor in catalysis.

It belongs to the PanB family. As to quaternary structure, homodecamer; pentamer of dimers. The cofactor is Mg(2+).

It localises to the cytoplasm. It carries out the reaction 3-methyl-2-oxobutanoate + (6R)-5,10-methylene-5,6,7,8-tetrahydrofolate + H2O = 2-dehydropantoate + (6S)-5,6,7,8-tetrahydrofolate. It participates in cofactor biosynthesis; (R)-pantothenate biosynthesis; (R)-pantoate from 3-methyl-2-oxobutanoate: step 1/2. Functionally, catalyzes the reversible reaction in which hydroxymethyl group from 5,10-methylenetetrahydrofolate is transferred onto alpha-ketoisovalerate to form ketopantoate. The protein is 3-methyl-2-oxobutanoate hydroxymethyltransferase of Sodalis glossinidius (strain morsitans).